We begin with the raw amino-acid sequence, 317 residues long: MHNYLDFEKPISDLEGKIIELKKLADEDESIDTSEEINRLESRVNDAMQDIYSKLNAWQKTQVARHPQRPHFVDYAKSLFTDFTPLAGDRKFSEDAAIQAGLARFNGQPVAIIGQEKGNDTKSRLKHNFGSARPEGYRKAIRVLELADRFSLPVVTLIDTAGAYPGVGAEERGQAEAIARSTEMCLNVKVPIVSVVIGEGGSGGAIAIATGNRVYMLEHSVYSVISPEGAASILWRDSTRAKEAATNMKITSEDLKSLGVIDGIIPEPIGGAHRAPETVISATGDVIAKALADLSQRSGTQLRAERRQKFLDIGRNL.

In terms of domain architecture, CoA carboxyltransferase C-terminal spans arginine 39 to aspartate 293.

It belongs to the AccA family. Acetyl-CoA carboxylase is a heterohexamer composed of biotin carboxyl carrier protein (AccB), biotin carboxylase (AccC) and two subunits each of ACCase subunit alpha (AccA) and ACCase subunit beta (AccD).

Its subcellular location is the cytoplasm. It catalyses the reaction N(6)-carboxybiotinyl-L-lysyl-[protein] + acetyl-CoA = N(6)-biotinyl-L-lysyl-[protein] + malonyl-CoA. Its pathway is lipid metabolism; malonyl-CoA biosynthesis; malonyl-CoA from acetyl-CoA: step 1/1. Component of the acetyl coenzyme A carboxylase (ACC) complex. First, biotin carboxylase catalyzes the carboxylation of biotin on its carrier protein (BCCP) and then the CO(2) group is transferred by the carboxyltransferase to acetyl-CoA to form malonyl-CoA. This Agrobacterium fabrum (strain C58 / ATCC 33970) (Agrobacterium tumefaciens (strain C58)) protein is Acetyl-coenzyme A carboxylase carboxyl transferase subunit alpha.